The following is a 232-amino-acid chain: Octanoyltransferase (232 aa).

Positions 44–219 (EHTGDELWVV…QLARQFGLVL (176 aa)) constitute a BPL/LPL catalytic domain. Residues 83-90 (RGGQVTYH), 150-152 (ALG), and 163-165 (GLS) each bind substrate. Cysteine 181 (acyl-thioester intermediate) is an active-site residue.

The protein belongs to the LipB family.

It localises to the cytoplasm. The catalysed reaction is octanoyl-[ACP] + L-lysyl-[protein] = N(6)-octanoyl-L-lysyl-[protein] + holo-[ACP] + H(+). The protein operates within protein modification; protein lipoylation via endogenous pathway; protein N(6)-(lipoyl)lysine from octanoyl-[acyl-carrier-protein]: step 1/2. Its function is as follows. Catalyzes the transfer of endogenously produced octanoic acid from octanoyl-acyl-carrier-protein onto the lipoyl domains of lipoate-dependent enzymes. Lipoyl-ACP can also act as a substrate although octanoyl-ACP is likely to be the physiological substrate. The polypeptide is Octanoyltransferase (Xanthomonas campestris pv. campestris (strain B100)).